The primary structure comprises 697 residues: Elongation factor G (697 aa).

Residues 10–285 enclose the tr-type G domain; that stretch reads EKTRNIGIVA…GVNDYLPSPL (276 aa). GTP is bound by residues 19-26, 83-87, and 137-140; these read AHIDAGKT, DTPGH, and NKMD.

It belongs to the TRAFAC class translation factor GTPase superfamily. Classic translation factor GTPase family. EF-G/EF-2 subfamily.

Its subcellular location is the cytoplasm. Its function is as follows. Catalyzes the GTP-dependent ribosomal translocation step during translation elongation. During this step, the ribosome changes from the pre-translocational (PRE) to the post-translocational (POST) state as the newly formed A-site-bound peptidyl-tRNA and P-site-bound deacylated tRNA move to the P and E sites, respectively. Catalyzes the coordinated movement of the two tRNA molecules, the mRNA and conformational changes in the ribosome. The polypeptide is Elongation factor G (Ligilactobacillus salivarius (strain UCC118) (Lactobacillus salivarius)).